The chain runs to 355 residues: Inositol polyphosphate multikinase (355 aa).

Met-1 is subject to N-acetylmethionine. Lys-31 contributes to the ATP binding site. A Phosphoserine modification is found at Ser-97. ATP-binding positions include 118–120 (ENL) and Asp-131. 127–135 (PNILDIKLG) is a binding site for substrate. 2 residues coordinate Ca(2+): Glu-271 and Asn-274. The segment covering 284-304 (FIDDDDDDDDNDDDDDDDAEG) has biased composition (acidic residues). Residues 284 to 317 (FIDDDDDDDDNDDDDDDDAEGSSEGPKDKKTTGS) form a disordered region. Asp-325 contributes to the ATP binding site. Residue Gly-334 participates in Ca(2+) binding.

It belongs to the inositol phosphokinase (IPK) family. Interacts with ARG80 and MCM1. Requires Ca(2+) as cofactor.

The protein localises to the nucleus. It catalyses the reaction 1D-myo-inositol 1,4,5-trisphosphate + 2 ATP = 1D-myo-inositol 1,3,4,5,6-pentakisphosphate + 2 ADP + 2 H(+). It carries out the reaction 1D-myo-inositol 1,4,5-trisphosphate + ATP = 1D-myo-inositol 1,4,5,6-tetrakisphosphate + ADP + H(+). The catalysed reaction is 1D-myo-inositol 1,4,5-trisphosphate + ATP = 1D-myo-inositol 1,3,4,5-tetrakisphosphate + ADP + H(+). The enzyme catalyses 1D-myo-inositol 1,4,5,6-tetrakisphosphate + ATP = 1D-myo-inositol 1,3,4,5,6-pentakisphosphate + ADP + H(+). It catalyses the reaction a 1,2-diacyl-sn-glycero-3-phospho-(1D-myo-inositol-4,5-bisphosphate) + ATP = a 1,2-diacyl-sn-glycero-3-phospho-(1D-myo-inositol-3,4,5-trisphosphate) + ADP + H(+). Inositol phosphate kinase with both monophosphoinositol and diphosphoinositol polyphosphate synthase activities. Able to phosphorylate inositol 1,4,5-trisphosphate (Ins(1,4,5)P3) on both the carbon-3 and carbon-6 positions to synthesize inositol 1,3,4,5-tetrakisphosphate (Ins(1,3,4,5)P4) and inositol 1,4,5,6-tetrakisphosphate (Ins(1,4,5,6)P4), and then to subsequently phosphorylate and convert either isomer of InsP4 to inositol 1,3,4,5,6-pentakisphosphate (Ins(1,3,4,5,6)P5). Its predominant in vivo catalytic function is to convert Ins(1,4,5)P3 to Ins(1,4,5,6)P4 to Ins(1,3,4,5,6)P5 via 6- and 3-kinase activities. It can also use Ins(1,3,4,5,6)P5 as a substrate and act as a diphosphoinositol polyphosphate synthase to generate two different isomers of PP-InsP4. Also has a role in transcription regulation. Forms a complex with ARG80, ARG81 and MCM1 (ArgR-MCM1), which coordinates the expression of arginine anabolic and catabolic genes in response to arginine. Recruits ARG80 and MCM21 to stabilize them. Neither the kinase activity nor inositol phosphates are required for the formation of ArgR-MCM1 transcriptional complexes on DNA promoter elements and the control of arginine metabolism. In contrast, only the catalytic activity is required for PHO gene repression by phosphate and for NCR gene activation in response to nitrogen availability, indicating a role for inositol pyrophosphates in these controls. Inositol polyphosphates may be involved in the regulation of chromatin remodeling of transcription. Regulates nuclear mRNA export via inositol phosphate metabolism. Also has lipid kinase activity, transforming the lipid inositol phosphatidylinositol 4,5-bisphosphate (PI(4,5)P2) into phosphatidylinositol 3,4,5-trisphosphate (PI(3,4,5)P3) in the nucleus. Its kinase activity is necessary for the propagation of most [PSI+] prion variants. The chain is Inositol polyphosphate multikinase (ARG82) from Saccharomyces cerevisiae (strain ATCC 204508 / S288c) (Baker's yeast).